A 628-amino-acid chain; its full sequence is Carbon monoxide dehydrogenase 1 (628 aa).

Residues Cys44, Cys52, Cys53, Cys56, Cys61, and Cys75 each contribute to the [4Fe-4S] cluster site. Residues His266, Cys302, Cys340, Cys448, Cys478, and Cys519 each contribute to the [Ni-4Fe-5S] cluster site.

It belongs to the Ni-containing carbon monoxide dehydrogenase family. Homodimer. [4Fe-4S] cluster serves as cofactor. [Ni-4Fe-5S] cluster is required as a cofactor.

The catalysed reaction is CO + 2 oxidized [2Fe-2S]-[ferredoxin] + H2O = 2 reduced [2Fe-2S]-[ferredoxin] + CO2 + 2 H(+). Its function is as follows. CODH oxidizes carbon monoxide coupled, via CooF, to the reduction of a hydrogen cation by a hydrogenase (possibly CooH). The polypeptide is Carbon monoxide dehydrogenase 1 (cooS1) (Methanosarcina acetivorans (strain ATCC 35395 / DSM 2834 / JCM 12185 / C2A)).